Here is a 1370-residue protein sequence, read N- to C-terminus: DNA-directed RNA polymerase subunit beta (1370 aa).

Belongs to the RNA polymerase beta chain family. The RNAP catalytic core consists of 2 alpha, 1 beta, 1 beta' and 1 omega subunit. When a sigma factor is associated with the core the holoenzyme is formed, which can initiate transcription.

It carries out the reaction RNA(n) + a ribonucleoside 5'-triphosphate = RNA(n+1) + diphosphate. Functionally, DNA-dependent RNA polymerase catalyzes the transcription of DNA into RNA using the four ribonucleoside triphosphates as substrates. The protein is DNA-directed RNA polymerase subunit beta of Polaromonas naphthalenivorans (strain CJ2).